Here is a 119-residue protein sequence, read N- to C-terminus: NADH-quinone oxidoreductase subunit A (119 aa).

The next 3 helical transmembrane spans lie at 7-27 (FPVL…MTIG), 63-83 (LIAI…PWGV), and 88-108 (IGWP…VGFV).

The protein belongs to the complex I subunit 3 family. As to quaternary structure, NDH-1 is composed of 14 different subunits. Subunits NuoA, H, J, K, L, M, N constitute the membrane sector of the complex.

It localises to the cell inner membrane. It carries out the reaction a quinone + NADH + 5 H(+)(in) = a quinol + NAD(+) + 4 H(+)(out). Functionally, NDH-1 shuttles electrons from NADH, via FMN and iron-sulfur (Fe-S) centers, to quinones in the respiratory chain. The immediate electron acceptor for the enzyme in this species is believed to be ubiquinone. Couples the redox reaction to proton translocation (for every two electrons transferred, four hydrogen ions are translocated across the cytoplasmic membrane), and thus conserves the redox energy in a proton gradient. The chain is NADH-quinone oxidoreductase subunit A from Ralstonia pickettii (strain 12J).